A 397-amino-acid chain; its full sequence is Acetylornithine aminotransferase (397 aa).

Phenylalanine 129 provides a ligand contact to pyridoxal 5'-phosphate. Arginine 132 is a binding site for N(2)-acetyl-L-ornithine. 214–217 provides a ligand contact to pyridoxal 5'-phosphate; that stretch reads DEVQ. Residue lysine 243 is modified to N6-(pyridoxal phosphate)lysine. Serine 271 provides a ligand contact to N(2)-acetyl-L-ornithine. Threonine 272 is a binding site for pyridoxal 5'-phosphate.

Belongs to the class-III pyridoxal-phosphate-dependent aminotransferase family. ArgD subfamily. Homodimer. It depends on pyridoxal 5'-phosphate as a cofactor.

The protein localises to the cytoplasm. The enzyme catalyses N(2)-acetyl-L-ornithine + 2-oxoglutarate = N-acetyl-L-glutamate 5-semialdehyde + L-glutamate. Its pathway is amino-acid biosynthesis; L-arginine biosynthesis; N(2)-acetyl-L-ornithine from L-glutamate: step 4/4. This chain is Acetylornithine aminotransferase, found in Neisseria meningitidis serogroup A / serotype 4A (strain DSM 15465 / Z2491).